The sequence spans 491 residues: Ketol-acid reductoisomerase (NADP(+)) (491 aa).

The KARI N-terminal Rossmann domain maps to 15-208; it reads AQLGKCRFMG…GGHRAGVLES (194 aa). NADP(+) contacts are provided by residues 45–48, R68, R76, S78, and 108–110; these read CGAQ and DKQ. The active site involves H132. An NADP(+)-binding site is contributed by G158. 2 consecutive KARI C-terminal knotted domains span residues 209-344 and 345-484; these read SFVA…TAPQ and FEGK…MTDM. Mg(2+)-binding residues include D217, E221, E389, and E393. S414 serves as a coordination point for substrate.

It belongs to the ketol-acid reductoisomerase family. The cofactor is Mg(2+).

It catalyses the reaction (2R)-2,3-dihydroxy-3-methylbutanoate + NADP(+) = (2S)-2-acetolactate + NADPH + H(+). The catalysed reaction is (2R,3R)-2,3-dihydroxy-3-methylpentanoate + NADP(+) = (S)-2-ethyl-2-hydroxy-3-oxobutanoate + NADPH + H(+). It participates in amino-acid biosynthesis; L-isoleucine biosynthesis; L-isoleucine from 2-oxobutanoate: step 2/4. It functions in the pathway amino-acid biosynthesis; L-valine biosynthesis; L-valine from pyruvate: step 2/4. Its function is as follows. Involved in the biosynthesis of branched-chain amino acids (BCAA). Catalyzes an alkyl-migration followed by a ketol-acid reduction of (S)-2-acetolactate (S2AL) to yield (R)-2,3-dihydroxy-isovalerate. In the isomerase reaction, S2AL is rearranged via a Mg-dependent methyl migration to produce 3-hydroxy-3-methyl-2-ketobutyrate (HMKB). In the reductase reaction, this 2-ketoacid undergoes a metal-dependent reduction by NADPH to yield (R)-2,3-dihydroxy-isovalerate. This Salmonella choleraesuis (strain SC-B67) protein is Ketol-acid reductoisomerase (NADP(+)).